We begin with the raw amino-acid sequence, 1158 residues long: ATP-dependent helicase/deoxyribonuclease subunit B (1158 aa).

One can recognise a UvrD-like helicase ATP-binding domain in the interval 1–275 (MTLHAYLGRA…QYFNQLYRFN (275 aa)). 8–15 (GRAGTGKS) is a binding site for ATP. Residues 269 to 583 (NQLYRFNNQD…SIGTMDLAKV (315 aa)) enclose the UvrD-like helicase C-terminal domain. [4Fe-4S] cluster is bound by residues cysteine 784, cysteine 1112, cysteine 1115, and cysteine 1121.

The protein belongs to the helicase family. AddB/RexB type 1 subfamily. As to quaternary structure, heterodimer of AddA and AddB. Mg(2+) is required as a cofactor. [4Fe-4S] cluster serves as cofactor.

Functionally, the heterodimer acts as both an ATP-dependent DNA helicase and an ATP-dependent, dual-direction single-stranded exonuclease. Recognizes the chi site generating a DNA molecule suitable for the initiation of homologous recombination. The AddB subunit has 5' -&gt; 3' nuclease activity but not helicase activity. In Staphylococcus aureus (strain MRSA252), this protein is ATP-dependent helicase/deoxyribonuclease subunit B.